A 79-amino-acid polypeptide reads, in one-letter code: Putative membrane protein insertion efficiency factor (79 aa).

Belongs to the UPF0161 family.

The protein resides in the cell inner membrane. In terms of biological role, could be involved in insertion of integral membrane proteins into the membrane. This chain is Putative membrane protein insertion efficiency factor, found in Thermotoga neapolitana (strain ATCC 49049 / DSM 4359 / NBRC 107923 / NS-E).